A 378-amino-acid polypeptide reads, in one-letter code: Succinyl-diaminopimelate desuccinylase (378 aa).

His-67 contacts Zn(2+). Asp-69 is an active-site residue. A Zn(2+)-binding site is contributed by Asp-100. Residue Glu-134 is the Proton acceptor of the active site. Residues Glu-135, Glu-163, and His-349 each coordinate Zn(2+).

It belongs to the peptidase M20A family. DapE subfamily. In terms of assembly, homodimer. Zn(2+) serves as cofactor. The cofactor is Co(2+).

The catalysed reaction is N-succinyl-(2S,6S)-2,6-diaminopimelate + H2O = (2S,6S)-2,6-diaminopimelate + succinate. The protein operates within amino-acid biosynthesis; L-lysine biosynthesis via DAP pathway; LL-2,6-diaminopimelate from (S)-tetrahydrodipicolinate (succinylase route): step 3/3. Catalyzes the hydrolysis of N-succinyl-L,L-diaminopimelic acid (SDAP), forming succinate and LL-2,6-diaminopimelate (DAP), an intermediate involved in the bacterial biosynthesis of lysine and meso-diaminopimelic acid, an essential component of bacterial cell walls. In Nitrosomonas eutropha (strain DSM 101675 / C91 / Nm57), this protein is Succinyl-diaminopimelate desuccinylase.